Here is a 109-residue protein sequence, read N- to C-terminus: Putative double-stranded DNA mimic protein KPK_2119 (109 aa).

The protein belongs to the putative dsDNA mimic protein family.

In terms of biological role, may act as a double-stranded DNA (dsDNA) mimic. Probably regulates the activity of a dsDNA-binding protein. This Klebsiella pneumoniae (strain 342) protein is Putative double-stranded DNA mimic protein KPK_2119.